A 243-amino-acid chain; its full sequence is DNA repair protein RecO (243 aa).

This sequence belongs to the RecO family.

In terms of biological role, involved in DNA repair and RecF pathway recombination. This is DNA repair protein RecO from Azoarcus sp. (strain BH72).